The chain runs to 609 residues: Isocitrate dehydrogenase kinase/phosphatase (609 aa).

Residues 325–331 (APGIKGM) and K346 contribute to the ATP site. Residue D381 is part of the active site.

It belongs to the AceK family.

The protein resides in the cytoplasm. It carries out the reaction L-seryl-[isocitrate dehydrogenase] + ATP = O-phospho-L-seryl-[isocitrate dehydrogenase] + ADP + H(+). Its function is as follows. Bifunctional enzyme which can phosphorylate or dephosphorylate isocitrate dehydrogenase (IDH) on a specific serine residue. This is a regulatory mechanism which enables bacteria to bypass the Krebs cycle via the glyoxylate shunt in response to the source of carbon. When bacteria are grown on glucose, IDH is fully active and unphosphorylated, but when grown on acetate or ethanol, the activity of IDH declines drastically concomitant with its phosphorylation. This Acidovorax sp. (strain JS42) protein is Isocitrate dehydrogenase kinase/phosphatase.